A 142-amino-acid polypeptide reads, in one-letter code: Pro-vaccinia growth factor (142 aa).

The first 18 residues, 1–18 (MSMKYLMLLFAAMIIRSF), serve as a signal peptide directing secretion. The Extracellular portion of the chain corresponds to 19–100 (ADSGNAIETT…SENPNTTTSY (82 aa)). The N-linked (GlcNAc...) asparagine; by host glycan is linked to asparagine 34. One can recognise an EGF-like domain in the interval 41 to 81 (AIRLCGPEGDGYCLHGDCIHARDIDGMYCRCSHGYTGIRCQ). Disulfide bonds link cysteine 45–cysteine 58, cysteine 53–cysteine 69, and cysteine 71–cysteine 80. An N-linked (GlcNAc...) asparagine; by host glycan is attached at asparagine 95. A helical membrane pass occupies residues 101 to 121 (IPSPGIMLVLVGIIIIITCCL). Topologically, residues 122–142 (LSVYRFTRRTNKLPLQDMVVP) are cytoplasmic.

Belongs to the orthopoxvirus OPG019 family. In terms of assembly, vaccinia growth factor interacts with host EGFR and promotes EGFR dimerization.

The protein localises to the host membrane. It localises to the secreted. Its function is as follows. Stimulates cellular proliferation (hyperplasia)and mobility around infected cells to promote rapid and efficient spread of infection. This effect is beneficial for virus replication in vivo, because poxviruses replicate possibly better in proliferating cells than in quiescent cells. Acts by binding host EGFR, inducing its dimerization, autophosphorylation and leading to activation of several cellular pathways regulating cell proliferation or cell survival. The activation by host EGFR of mitogen activated protein kinases (MAPK) and extracellular-signal regulated kinases (ERK) are essential for the positive effect of vaccinia growth factor on poxvirus virulence in vivo. This chain is Pro-vaccinia growth factor (OPG019), found in Vaccinia virus (strain Copenhagen) (VACV).